Reading from the N-terminus, the 695-residue chain is Elongation factor G (695 aa).

Residues 9–283 form the tr-type G domain; it reads EKIRNIGIVA…AVIDYLPSPL (275 aa). Residues 18–25, 82–86, and 136–139 each bind GTP; these read AHIDAGKT, DTPGH, and NKMD.

It belongs to the TRAFAC class translation factor GTPase superfamily. Classic translation factor GTPase family. EF-G/EF-2 subfamily.

Its subcellular location is the cytoplasm. Catalyzes the GTP-dependent ribosomal translocation step during translation elongation. During this step, the ribosome changes from the pre-translocational (PRE) to the post-translocational (POST) state as the newly formed A-site-bound peptidyl-tRNA and P-site-bound deacylated tRNA move to the P and E sites, respectively. Catalyzes the coordinated movement of the two tRNA molecules, the mRNA and conformational changes in the ribosome. This Petrotoga mobilis (strain DSM 10674 / SJ95) protein is Elongation factor G.